The sequence spans 384 residues: Queuine tRNA-ribosyltransferase (384 aa).

Residue Asp92 is the Proton acceptor of the active site. Substrate is bound by residues 92–96 (DSGGF), Asp146, Gln192, and Gly219. Residues 250 to 256 (GVGTPAE) form an RNA binding region. Asp269 functions as the Nucleophile in the catalytic mechanism. The interval 274–278 (TRNAR) is RNA binding; important for wobble base 34 recognition. Zn(2+)-binding residues include Cys307, Cys309, Cys312, and His338.

Belongs to the queuine tRNA-ribosyltransferase family. As to quaternary structure, homodimer. Within each dimer, one monomer is responsible for RNA recognition and catalysis, while the other monomer binds to the replacement base PreQ1. Requires Zn(2+) as cofactor.

It catalyses the reaction 7-aminomethyl-7-carbaguanine + guanosine(34) in tRNA = 7-aminomethyl-7-carbaguanosine(34) in tRNA + guanine. Its pathway is tRNA modification; tRNA-queuosine biosynthesis. Functionally, catalyzes the base-exchange of a guanine (G) residue with the queuine precursor 7-aminomethyl-7-deazaguanine (PreQ1) at position 34 (anticodon wobble position) in tRNAs with GU(N) anticodons (tRNA-Asp, -Asn, -His and -Tyr). Catalysis occurs through a double-displacement mechanism. The nucleophile active site attacks the C1' of nucleotide 34 to detach the guanine base from the RNA, forming a covalent enzyme-RNA intermediate. The proton acceptor active site deprotonates the incoming PreQ1, allowing a nucleophilic attack on the C1' of the ribose to form the product. After dissociation, two additional enzymatic reactions on the tRNA convert PreQ1 to queuine (Q), resulting in the hypermodified nucleoside queuosine (7-(((4,5-cis-dihydroxy-2-cyclopenten-1-yl)amino)methyl)-7-deazaguanosine). The chain is Queuine tRNA-ribosyltransferase from Desulfosudis oleivorans (strain DSM 6200 / JCM 39069 / Hxd3) (Desulfococcus oleovorans).